We begin with the raw amino-acid sequence, 313 residues long: Probable inactive peptidyl-prolyl cis-trans isomerase-like 6 (313 aa).

The region spanning 147 to 310 (YLDICIDLSP…LLCSIADSGV (164 aa)) is the PPIase cyclophilin-type domain.

It belongs to the cyclophilin-type PPIase family.

Functionally, probable inactive PPIase with no peptidyl-prolyl cis-trans isomerase activity. The chain is Probable inactive peptidyl-prolyl cis-trans isomerase-like 6 from Mus musculus (Mouse).